The chain runs to 399 residues: Elongation factor Tu (399 aa).

A tr-type G domain is found at 10-209 (KPHVNIGTIG…AVDDYIPTPV (200 aa)). The G1 stretch occupies residues 19-26 (GHVDHGKT). GTP is bound at residue 19-26 (GHVDHGKT). Thr-26 serves as a coordination point for Mg(2+). The tract at residues 62–66 (GITIN) is G2. The tract at residues 83–86 (DCPG) is G3. Residues 83 to 87 (DCPGH) and 138 to 141 (NKCD) contribute to the GTP site. The interval 138–141 (NKCD) is G4. A G5 region spans residues 175–177 (SAY).

It belongs to the TRAFAC class translation factor GTPase superfamily. Classic translation factor GTPase family. EF-Tu/EF-1A subfamily. Monomer.

It is found in the cytoplasm. The catalysed reaction is GTP + H2O = GDP + phosphate + H(+). Functionally, GTP hydrolase that promotes the GTP-dependent binding of aminoacyl-tRNA to the A-site of ribosomes during protein biosynthesis. This is Elongation factor Tu from Bifidobacterium longum subsp. infantis (strain ATCC 15697 / DSM 20088 / JCM 1222 / NCTC 11817 / S12).